Consider the following 197-residue polypeptide: Imidazoleglycerol-phosphate dehydratase (197 aa).

Belongs to the imidazoleglycerol-phosphate dehydratase family.

It is found in the cytoplasm. The catalysed reaction is D-erythro-1-(imidazol-4-yl)glycerol 3-phosphate = 3-(imidazol-4-yl)-2-oxopropyl phosphate + H2O. The protein operates within amino-acid biosynthesis; L-histidine biosynthesis; L-histidine from 5-phospho-alpha-D-ribose 1-diphosphate: step 6/9. This Syntrophomonas wolfei subsp. wolfei (strain DSM 2245B / Goettingen) protein is Imidazoleglycerol-phosphate dehydratase.